The chain runs to 775 residues: Phenylalanine--tRNA ligase beta subunit (775 aa).

The tRNA-binding domain maps to 39 to 147 (GIDLDGVVFG…EDFKPGTDAN (109 aa)). The 77-residue stretch at 394-470 (YKPKKVFLPQ…RVKGYEHYTS (77 aa)) folds into the B5 domain. The Mg(2+) site is built by Asp-448, Asp-454, Glu-457, and Glu-458. The FDX-ACB domain occupies 681–774 (AKFPPVVRDI…LKEKYGVELR (94 aa)).

The protein belongs to the phenylalanyl-tRNA synthetase beta subunit family. Type 1 subfamily. In terms of assembly, tetramer of two alpha and two beta subunits. Requires Mg(2+) as cofactor.

It is found in the cytoplasm. The catalysed reaction is tRNA(Phe) + L-phenylalanine + ATP = L-phenylalanyl-tRNA(Phe) + AMP + diphosphate + H(+). This chain is Phenylalanine--tRNA ligase beta subunit (pheT), found in Aquifex aeolicus (strain VF5).